The chain runs to 1016 residues: Probably inactive leucine-rich repeat receptor-like protein kinase At3g28040 (1016 aa).

The N-terminal stretch at 1 to 26 is a signal peptide; sequence MGKQRRTMISFTLFLTLTMMSSLING. Over 27–646 the chain is Extracellular; sequence DTDSIQLNDD…FHRRMFLSVS (620 aa). LRR repeat units lie at residues 102-124, 125-147, 149-171, 174-196, 198-219, 224-245, 248-270, 272-295, 296-318, 320-342, 344-366, 368-390, 391-413, 416-438, 440-462, 464-486, 488-510, 512-535, 536-559, and 560-582; these read RLKV…SNNN, HLQK…LGSI, SLQH…LFNN, SLRY…LFRC, VLNS…VSGI, RLRA…GILS, NLKE…IGLC, HLNR…QKLK, SLNH…IGDM, GLVH…ISNL, SLKD…LESC, ELMI…FFDL, GLQE…SSRL, SLIR…VGLF, HMRY…IEFL, NLTV…ICES, SLQI…IGNC, SLKL…SNLQ, ELKI…GDLQ, and NLLL…DVFQ. Asn112, Asn135, and Asn171 each carry an N-linked (GlcNAc...) asparagine glycan. Asn203 carries N-linked (GlcNAc...) asparagine glycosylation. The N-linked (GlcNAc...) asparagine glycan is linked to Asn349. 4 N-linked (GlcNAc...) asparagine glycosylation sites follow: Asn445, Asn464, Asn509, and Asn522. N-linked (GlcNAc...) asparagine glycosylation is present at Asn565. The helical transmembrane segment at 647–667 threads the bilayer; sequence VIVAISAAILIFSGVIIITLL. Over 668 to 1016 the chain is Cytoplasmic; it reads NASVRRRLAF…PVPHRIMDSF (349 aa). Residues 726–1013 form the Protein kinase domain; it reads LNKASRIGEG…INSPVPHRIM (288 aa). ATP-binding positions include 732–740 and Lys755; that span reads IGEGVFGTV. A phosphotyrosine mark is found at Tyr841 and Tyr898.

It belongs to the protein kinase superfamily. Ser/Thr protein kinase family.

Its subcellular location is the membrane. This chain is Probably inactive leucine-rich repeat receptor-like protein kinase At3g28040, found in Arabidopsis thaliana (Mouse-ear cress).